The chain runs to 235 residues: PRA1 family protein 1 (235 aa).

Residues 1 to 17 (MESNSNSNETMYGNPNI) show a composition bias toward polar residues. A disordered region spans residues 1-55 (MESNSNSNETMYGNPNINMGFVDSGNSNIGNNTGSMSPPPQQQQQPQQASSTPAG). Residues 24–48 (SGNSNIGNNTGSMSPPPQQQQQPQQ) show a composition bias toward low complexity. The next 2 helical transmembrane spans lie at 144–164 (SVFFIITNPFYLLLLGVLLFI) and 187–207 (AFLSIYFLLYAGSSIFWLVGA).

The protein belongs to the PRA1 family.

It localises to the membrane. May act as a general Rab protein regulator. The sequence is that of PRA1 family protein 1 (prafA) from Dictyostelium discoideum (Social amoeba).